A 231-amino-acid chain; its full sequence is Large ribosomal subunit protein uL1 (231 aa).

It belongs to the universal ribosomal protein uL1 family. Part of the 50S ribosomal subunit.

Its function is as follows. Binds directly to 23S rRNA. The L1 stalk is quite mobile in the ribosome, and is involved in E site tRNA release. Protein L1 is also a translational repressor protein, it controls the translation of the L11 operon by binding to its mRNA. This Francisella philomiragia subsp. philomiragia (strain ATCC 25017 / CCUG 19701 / FSC 153 / O#319-036) protein is Large ribosomal subunit protein uL1.